The chain runs to 329 residues: NADH-quinone oxidoreductase subunit H (329 aa).

The next 8 helical transmembrane spans lie at 9-29 (ILKV…LTYV), 79-99 (IAPV…PFFP), 117-137 (VGIL…LLAG), 162-182 (VSGL…LIEI), 188-208 (GGIF…FLIA), 243-263 (FFIG…LLFF), 269-289 (LWFI…LFLF), and 309-329 (WKVL…VLIL).

It belongs to the complex I subunit 1 family. NDH-1 is composed of 14 different subunits. Subunits NuoA, H, J, K, L, M, N constitute the membrane sector of the complex.

The protein resides in the cell inner membrane. The catalysed reaction is a quinone + NADH + 5 H(+)(in) = a quinol + NAD(+) + 4 H(+)(out). Its function is as follows. NDH-1 shuttles electrons from NADH, via FMN and iron-sulfur (Fe-S) centers, to quinones in the respiratory chain. The immediate electron acceptor for the enzyme in this species is believed to be ubiquinone. Couples the redox reaction to proton translocation (for every two electrons transferred, four hydrogen ions are translocated across the cytoplasmic membrane), and thus conserves the redox energy in a proton gradient. This subunit may bind ubiquinone. The protein is NADH-quinone oxidoreductase subunit H of Wolinella succinogenes (strain ATCC 29543 / DSM 1740 / CCUG 13145 / JCM 31913 / LMG 7466 / NCTC 11488 / FDC 602W) (Vibrio succinogenes).